Reading from the N-terminus, the 383-residue chain is MLKECIKIEGRAFLGGKVTRVKLGSGECKTLQLSNKYLILPGMVDIHVHFRDWGLSHKETLRGGAAAALAGGVVAVGDMPNTKPHIRTADLYKKRLEEGSALPIIYKVHMGIPQDLEELRAARPPTIKIYPEDVEAFGWGHIEKAAEACASLGCRLVLHCEDPAYFKEGERPPIAELACVERTRQMAFKTGVKIHLTHITLSQTAEAARGWATVDATPHHLLLDVENCKDSGLCHVNPRLRTPEMRKRLLAAFASGLVDIYATDHAPHTLEEKRSGAPPPGICSLDVALSLLLTLWKRGVVTLSDVVRLYSHRPARFFDLQIDVKKGYFTVVRLEEFTVRGEEFAGTCKHTPFEGFKAFGRVFATSVGGRIYFKDGDVYMINI.

Zn(2+) is bound by residues histidine 47 and histidine 49. Substrate-binding positions include 49–51 and asparagine 81; that span reads HFR. Lysine 128, histidine 159, histidine 198, and aspartate 264 together coordinate Zn(2+). Lysine 128 is modified (N6-carboxylysine). Residue aspartate 264 is part of the active site. Residues histidine 268 and 280–281 each bind substrate; that span reads PG.

It belongs to the metallo-dependent hydrolases superfamily. DHOase family. Class I DHOase subfamily. Zn(2+) is required as a cofactor.

It carries out the reaction (S)-dihydroorotate + H2O = N-carbamoyl-L-aspartate + H(+). It participates in pyrimidine metabolism; UMP biosynthesis via de novo pathway; (S)-dihydroorotate from bicarbonate: step 3/3. In terms of biological role, catalyzes the reversible cyclization of carbamoyl aspartate to dihydroorotate. The sequence is that of Dihydroorotase from Pyrobaculum aerophilum (strain ATCC 51768 / DSM 7523 / JCM 9630 / CIP 104966 / NBRC 100827 / IM2).